The sequence spans 63 residues: Arabinogalactan protein 41 (63 aa).

The first 27 residues, 1–27 (MSGSRLFFGVSTIVSIIFAILLPMAHA), serve as a signal peptide directing secretion. The residue at position 28 (Gln28) is a Pyrrolidone carboxylic acid. 3 positions are modified to 4-hydroxyproline: Pro32, Pro34, and Pro36. O-linked (Ara...) hydroxyproline glycans are attached at residues Pro32, Pro34, and Pro36. The GPI-anchor amidated serine moiety is linked to residue Ser38. A propeptide spans 39-63 (DGTTIDQGIAYVLMLVALVLTYLIH) (removed in mature form).

The protein belongs to the AG-peptide AGP family. Post-translationally, contains 4-hydroxyproline; hydroxylated on Pro-32, Pro-34 and Pro-36. O-glycosylated on hydroxyprolines; noncontiguous hydroxylproline residues are glycosylated with arabinogalactan.

The protein resides in the cell membrane. Proteoglycan that seems to be implicated in diverse developmental roles such as differentiation, cell-cell recognition, embryogenesis and programmed cell death. The chain is Arabinogalactan protein 41 from Arabidopsis thaliana (Mouse-ear cress).